The primary structure comprises 391 residues: Alkanesulfonate monooxygenase (391 aa).

This sequence belongs to the SsuD family.

It carries out the reaction an alkanesulfonate + FMNH2 + O2 = an aldehyde + FMN + sulfite + H2O + 2 H(+). Its function is as follows. Catalyzes the desulfonation of aliphatic sulfonates. This Paracidovorax citrulli (strain AAC00-1) (Acidovorax citrulli) protein is Alkanesulfonate monooxygenase.